The primary structure comprises 160 residues: MTKKKEHKPGSATIAQNKRARHEYFIEQEFEAGLSLQGWEVKSLRAGKANIGDSYVLLKDGEAYLFGATFQPLTVASSHVVCDPMRTRKLLLNKRELDSLFGRVNREGYTVVALSLYWKNAWVKVKIGVAKGKKEYDKRTDIKEREWQLDKSRIMKHASR.

It belongs to the SmpB family.

The protein localises to the cytoplasm. Functionally, required for rescue of stalled ribosomes mediated by trans-translation. Binds to transfer-messenger RNA (tmRNA), required for stable association of tmRNA with ribosomes. tmRNA and SmpB together mimic tRNA shape, replacing the anticodon stem-loop with SmpB. tmRNA is encoded by the ssrA gene; the 2 termini fold to resemble tRNA(Ala) and it encodes a 'tag peptide', a short internal open reading frame. During trans-translation Ala-aminoacylated tmRNA acts like a tRNA, entering the A-site of stalled ribosomes, displacing the stalled mRNA. The ribosome then switches to translate the ORF on the tmRNA; the nascent peptide is terminated with the 'tag peptide' encoded by the tmRNA and targeted for degradation. The ribosome is freed to recommence translation, which seems to be the essential function of trans-translation. In Sodalis glossinidius (strain morsitans), this protein is SsrA-binding protein.